The sequence spans 589 residues: BTB/POZ domain and ankyrin repeat-containing protein NPR3 (589 aa).

Positions 1–25 (METSTISFSSSSPPSPPPPQPAPGD) are disordered. Over residues 13-22 (PPSPPPPQPA) the composition is skewed to pro residues. The BTB domain maps to 52–137 (AEIVLASGGG…LYTGRLRSAP (86 aa)). The segment at 140–154 (AAACLDDGCSHDACR) adopts a C2HC NPR-type zinc-finger fold. Residues Cys143, Cys148, His150, and Cys153 each contribute to the Zn(2+) site. ANK repeat units follow at residues 260–290 (KRVRNIHKALDSDDVDLVGMLLKESPVTLDD), 292–319 (FAIHYAAAYCEPKVLAELLKLESANVNL), and 323–352 (SGYTPLHMACMRREPDIIVSLIEKGASVLE). The tract at residues 382 to 521 (ERSKAYLCIG…LDKFLNEEST (140 aa)) is salicylic acid-binding core (SBC). Arg433 provides a ligand contact to salicylate. Positions 555–589 (DKAAGAAISSSTSASSSPRYETKLRPGNKKGKLSR) are disordered. The span at 558-571 (AGAAISSSTSASSS) shows a compositional bias: low complexity. Over residues 580–589 (PGNKKGKLSR) the composition is skewed to basic residues.

Belongs to the plant 'ANKYRIN-BTB/POZ' family. 'NPR1-like' subfamily. Interacts with TGA2.1, TGA2.2, TGA2.3, LG2, TGAL1, TGAL4, NRR, RH1, RH2 and RH3.

It localises to the nucleus. It functions in the pathway protein modification; protein ubiquitination. In terms of biological role, salicylic acid (SA)-binding substrate-specific adapter of an E3 ubiquitin-protein ligase complex (CUL3-RBX1-BTB) which mediates the ubiquitination and subsequent proteasomal degradation of target proteins. Involved in defense response against the bacterial blight disease caused by Xanthomonas oryzae pv. oryzae (Xoo). Plants expressing an NPR3/NH3 transgene driven by its native promoter show enhanced resistance to the Xoo pathogen, and exhibit elevated sensitivity to benzothiadiazole (BTH) treatment and enhanced induction of defense-related genes upon treatment with BTH. Intriguingly, constitutive over-expression of NPR3/NH3 with a ubiquitin promoter does not confer disease resistance to Xoo. The chain is BTB/POZ domain and ankyrin repeat-containing protein NPR3 from Oryza sativa subsp. japonica (Rice).